The primary structure comprises 572 residues: MSKLIKGIAASDGVAIAKAYLLVEPDLTFDKNEKVTDVEGEVAKFNSAIEASKVELTKIRNNAEVQLGADKAAIFDAHLLVLDDPELIQPIQDKIKNENANAATALTDVTTQFVTIFESMDNEYMKERAADIRDVSKRVLSHILGVELPNPSMIDESVVIVGNDLTPSDTAQLNKEFVQGFATNIGGRTSHSAIMSRSLEIPAIVGTKSITQEVKQGDMIIVDGLNGDVIVNPTEDELIAYQDKRERYFADKKELQKLRDADTVTVDGVHAELAANIGTPNDLPGVIENGAQGIGLYRTEFLYMGRDQMPTEEEQFEAYKEVLEAMDGKRVVVRTLDIGGDKELSYLNLPEEMNPFLGYRAIRLCLAQQDIFRPQLRALLRASVYGKLNIMFPMVATINEFREAKAILLEEKENLKNEGHDISDDIELGIMVEIPATAALADVFAKEVDFFSIGTNDLIQYTLAADRMSERVSYLYQPYNPSILRLVKQVIEASHKEGKWTGMCGEMAGDETAIPLLLGLGLDEFSMSATSILKARRQINGLSKNEMTELANRAVDCATQEEVIELVNNYVK.

The Tele-phosphohistidine intermediate role is filled by His-191. Residues Arg-298 and Arg-334 each coordinate phosphoenolpyruvate. Mg(2+) is bound by residues Glu-433 and Asp-457. Residues 456-457 and Arg-467 contribute to the phosphoenolpyruvate site; that span reads ND. The active-site Proton donor is the Cys-504.

This sequence belongs to the PEP-utilizing enzyme family. In terms of assembly, homodimer. Mg(2+) serves as cofactor.

The protein resides in the cytoplasm. The catalysed reaction is L-histidyl-[protein] + phosphoenolpyruvate = N(pros)-phospho-L-histidyl-[protein] + pyruvate. Its function is as follows. General (non sugar-specific) component of the phosphoenolpyruvate-dependent sugar phosphotransferase system (sugar PTS). This major carbohydrate active-transport system catalyzes the phosphorylation of incoming sugar substrates concomitantly with their translocation across the cell membrane. Enzyme I transfers the phosphoryl group from phosphoenolpyruvate (PEP) to the phosphoryl carrier protein (HPr). The protein is Phosphoenolpyruvate-protein phosphotransferase of Staphylococcus aureus (strain MSSA476).